Reading from the N-terminus, the 262-residue chain is 3-deoxy-manno-octulosonate cytidylyltransferase (262 aa).

The protein belongs to the KdsB family.

It localises to the cytoplasm. The enzyme catalyses 3-deoxy-alpha-D-manno-oct-2-ulosonate + CTP = CMP-3-deoxy-beta-D-manno-octulosonate + diphosphate. Its pathway is nucleotide-sugar biosynthesis; CMP-3-deoxy-D-manno-octulosonate biosynthesis; CMP-3-deoxy-D-manno-octulosonate from 3-deoxy-D-manno-octulosonate and CTP: step 1/1. It functions in the pathway bacterial outer membrane biogenesis; lipopolysaccharide biosynthesis. Its function is as follows. Activates KDO (a required 8-carbon sugar) for incorporation into bacterial lipopolysaccharide in Gram-negative bacteria. The polypeptide is 3-deoxy-manno-octulosonate cytidylyltransferase (Acidovorax ebreus (strain TPSY) (Diaphorobacter sp. (strain TPSY))).